A 232-amino-acid polypeptide reads, in one-letter code: Small ribosomal subunit protein uS3 (232 aa).

A KH type-2 domain is found at 39 to 107; that stretch reads VRQFLIKELA…PAQINIAEVR (69 aa).

It belongs to the universal ribosomal protein uS3 family. As to quaternary structure, part of the 30S ribosomal subunit. Forms a tight complex with proteins S10 and S14.

Functionally, binds the lower part of the 30S subunit head. Binds mRNA in the 70S ribosome, positioning it for translation. The polypeptide is Small ribosomal subunit protein uS3 (Serratia proteamaculans (strain 568)).